A 1539-amino-acid chain; its full sequence is Lysine-specific demethylase 5D (1539 aa).

In terms of domain architecture, JmjN spans 14-55 (CPVFEPSWAEFQDPLGYIAKIRPIAEKSGICKIRPPADWQPP). Positions 79-169 (TRVKLNYLDQ…IIYPYEMFQS (91 aa)) constitute an ARID domain. Residues 192 to 228 (PHSIPLRQSVQPSKFSSYSRRAKRLQPDPEPTEEDIE) form a disordered region. The segment covering 197-210 (LRQSVQPSKFSSYS) has biased composition (polar residues). Residues Lys205, Lys229, Lys244, and Lys272 each participate in a glycyl lysine isopeptide (Lys-Gly) (interchain with G-Cter in SUMO2) cross-link. Ser291 and Ser307 each carry phosphoserine. A PHD-type 1 zinc finger spans residues 316-362 (ICQVCSRGDEDDKLLFCDGCDDNYHIFCLLPPLPEIPRGIWRCPKCI). Residue Tyr430 coordinates 2-oxoglutarate. The 167-residue stretch at 458–624 (EYATSGWNLN…AGRQCIEHYR (167 aa)) folds into the JmjC domain. Fe cation-binding residues include His504 and Glu506. Residues Ser512, Asn514, and Lys522 each coordinate 2-oxoglutarate. Fe cation is bound at residue His592. The segment at 697-749 (CIKCKTTCFLSALACYDCPDGLVCLSHINDLCKCSSSRQYLRYRYTLDELPTM) adopts a C5HC2 zinc-finger fold. Ser884 bears the Phosphoserine mark. The PHD-type 2 zinc finger occupies 1174 to 1235 (ICVCGQVPAG…DTKFLCPLCM (62 aa)). A Phosphoserine modification is found at Ser1346. A disordered region spans residues 1429-1521 (HQGSRTRSRA…QHKDSGSSAA (93 aa)). Basic residues predominate over residues 1432–1446 (SRTRSRALERRRRRQ). Over residues 1477–1491 (GREEEHYQEKADREN) the composition is skewed to basic and acidic residues. Residues 1494–1521 (LTPSTDHSPFLKGNQNSLQHKDSGSSAA) show a composition bias toward polar residues.

It belongs to the JARID1 histone demethylase family. In terms of assembly, interacts with PCGF6, MSH5, ZMYND8, AR. L-ascorbate is required as a cofactor. Fe(2+) serves as cofactor. In terms of tissue distribution, expression is highly down-regulated in metastatic prostate tumors.

The protein localises to the nucleus. It catalyses the reaction N(6),N(6),N(6)-trimethyl-L-lysyl(4)-[histone H3] + 3 2-oxoglutarate + 3 O2 = L-lysyl(4)-[histone H3] + 3 formaldehyde + 3 succinate + 3 CO2. In terms of biological role, histone demethylase that specifically demethylates 'Lys-4' of histone H3, thereby playing a central role in histone code. Does not demethylate histone H3 'Lys-9', H3 'Lys-27', H3 'Lys-36', H3 'Lys-79' or H4 'Lys-20'. Demethylates trimethylated and dimethylated but not monomethylated H3 'Lys-4'. May play a role in spermatogenesis. Involved in transcriptional repression of diverse metastasis-associated genes; in this function seems to cooperate with ZMYND8. Suppresses prostate cancer cell invasion. Regulates androgen receptor (AR) transcriptional activity by demethylating H3K4me3 active transcription marks. The chain is Lysine-specific demethylase 5D (KDM5D) from Homo sapiens (Human).